The primary structure comprises 382 residues: UDP-N-acetylglucosamine--N-acetylmuramyl-(pentapeptide) pyrophosphoryl-undecaprenol N-acetylglucosamine transferase (382 aa).

Residues 11-13, asparagine 124, arginine 164, serine 192, and glutamine 314 each bind UDP-N-acetyl-alpha-D-glucosamine; that span reads TGG.

Belongs to the glycosyltransferase 28 family. MurG subfamily.

The protein resides in the cell membrane. It catalyses the reaction di-trans,octa-cis-undecaprenyl diphospho-N-acetyl-alpha-D-muramoyl-L-alanyl-D-glutamyl-meso-2,6-diaminopimeloyl-D-alanyl-D-alanine + UDP-N-acetyl-alpha-D-glucosamine = di-trans,octa-cis-undecaprenyl diphospho-[N-acetyl-alpha-D-glucosaminyl-(1-&gt;4)]-N-acetyl-alpha-D-muramoyl-L-alanyl-D-glutamyl-meso-2,6-diaminopimeloyl-D-alanyl-D-alanine + UDP + H(+). The protein operates within cell wall biogenesis; peptidoglycan biosynthesis. Cell wall formation. Catalyzes the transfer of a GlcNAc subunit on undecaprenyl-pyrophosphoryl-MurNAc-pentapeptide (lipid intermediate I) to form undecaprenyl-pyrophosphoryl-MurNAc-(pentapeptide)GlcNAc (lipid intermediate II). This Deinococcus deserti (strain DSM 17065 / CIP 109153 / LMG 22923 / VCD115) protein is UDP-N-acetylglucosamine--N-acetylmuramyl-(pentapeptide) pyrophosphoryl-undecaprenol N-acetylglucosamine transferase.